A 463-amino-acid chain; its full sequence is Zinc finger protein PLAGL1 (463 aa).

7 C2H2-type zinc fingers span residues 4 to 26 (YPCQ…NYSH), 32 to 56 (YKCL…MATH), 62 to 84 (HQCA…LQTH), 91 to 113 (FGCE…LALH), 120 to 142 (LTCG…LKAH), 156 to 178 (HQCD…LVVH), and 184 to 207 (FLCQ…KKTH). Residues 285 to 310 (LHPVAPPTSPPQPLQNHKYNTSSTSY) are disordered. Positions 287–297 (PVAPPTSPPQP) are enriched in pro residues. The span at 298–310 (LQNHKYNTSSTSY) shows a compositional bias: polar residues.

The protein belongs to the krueppel C2H2-type zinc-finger protein family. As to quaternary structure, interacts with THRSP.

Its subcellular location is the nucleus. Functionally, acts as a transcriptional activator. Involved in the transcriptional regulation of type 1 receptor for pituitary adenylate cyclase-activating polypeptide. The chain is Zinc finger protein PLAGL1 (PLAGL1) from Sus scrofa (Pig).